A 362-amino-acid polypeptide reads, in one-letter code: Ribosomal RNA large subunit methyltransferase M (362 aa).

S-adenosyl-L-methionine is bound by residues serine 187, 220–223 (CPGG), aspartate 239, aspartate 259, and aspartate 276. Lysine 305 functions as the Proton acceptor in the catalytic mechanism.

It belongs to the class I-like SAM-binding methyltransferase superfamily. RNA methyltransferase RlmE family. RlmM subfamily. Monomer.

Its subcellular location is the cytoplasm. The catalysed reaction is cytidine(2498) in 23S rRNA + S-adenosyl-L-methionine = 2'-O-methylcytidine(2498) in 23S rRNA + S-adenosyl-L-homocysteine + H(+). Functionally, catalyzes the 2'-O-methylation at nucleotide C2498 in 23S rRNA. The chain is Ribosomal RNA large subunit methyltransferase M from Shewanella frigidimarina (strain NCIMB 400).